A 337-amino-acid chain; its full sequence is MMVKRTGAVLALLATAALSACGSTPVASTAGNYAKPIGTAPVTANPTDYSSALVCLNQYARTNRIVAPRIAIGRIADYTGKEESDGSGRKVTQGASLMAVSAFAKAGMPLVERFDTSVSEFELKYANNKLISDRPNPAPDAPADFRKILAGQVPGSDFYVIGGITELNYNIRSAGIDAYAGDKDTDGLKGNFRRRVFIMNIALDLRLVNTRTLEVVDVISYQKQVVGREVSAGVFDFLNGNLFDISAGRGALEPMQLAVRALIERATVEMAANLYGMPGPESCLRFDPFGDATVGQTGAFTPAYNNLGTNNAQTRDDPSRWNARRDPDIRDAKRGRY.

Polar residues predominate over residues 303-313 (AYNNLGTNNAQ). The disordered stretch occupies residues 303–337 (AYNNLGTNNAQTRDDPSRWNARRDPDIRDAKRGRY). The span at 314–337 (TRDDPSRWNARRDPDIRDAKRGRY) shows a compositional bias: basic and acidic residues.

Its function is as follows. Required for the attachment of the holdfast to the cell. May be involved in the positive regulation of hfaC. The polypeptide is Putative transcription activator protein HfaB (hfaB) (Caulobacter vibrioides (strain ATCC 19089 / CIP 103742 / CB 15) (Caulobacter crescentus)).